A 536-amino-acid chain; its full sequence is Arginine--tRNA ligase (536 aa).

The short motif at 119-129 (ANPTGFLHIGH) is the 'HIGH' region element.

It belongs to the class-I aminoacyl-tRNA synthetase family. Monomer.

Its subcellular location is the cytoplasm. The catalysed reaction is tRNA(Arg) + L-arginine + ATP = L-arginyl-tRNA(Arg) + AMP + diphosphate. This chain is Arginine--tRNA ligase, found in Mycoplasma mobile (strain ATCC 43663 / 163K / NCTC 11711) (Mesomycoplasma mobile).